A 183-amino-acid chain; its full sequence is Gamma-crystallin N (183 aa).

4 Beta/gamma crystallin 'Greek key' domains span residues 6–46 (GKIT…RVES), 47–89 (GAWV…RPVG), 95–136 (FRID…KVYG), and 138–180 (GAWV…RRVL).

Belongs to the beta/gamma-crystallin family. In terms of assembly, monomer. In terms of tissue distribution, primordially eye-specific. Present in lens nucleus. In the retina, expression in observed in the outer plexiform layer (containing photoreceptors axons and synapses) and photoreceptor outer segments (at protein level). Also detected in the auditory hindbrain where it is highly expressed in the medial nucleus of the trapezoid body, but also present in other nuclei of the superior olivary complex.

Functionally, crystallins are the dominant structural components of the vertebrate eye lens. Also plays an important role for integrity and function of auditory nuclei. This Mus musculus (Mouse) protein is Gamma-crystallin N.